The following is a 359-amino-acid chain: N-acetyl-gamma-glutamyl-phosphate reductase (359 aa).

The active site involves C162.

This sequence belongs to the NAGSA dehydrogenase family. Type 1 subfamily.

The protein resides in the cytoplasm. The enzyme catalyses N-acetyl-L-glutamate 5-semialdehyde + phosphate + NADP(+) = N-acetyl-L-glutamyl 5-phosphate + NADPH + H(+). The protein operates within amino-acid biosynthesis; L-arginine biosynthesis; N(2)-acetyl-L-ornithine from L-glutamate: step 3/4. Its function is as follows. Catalyzes the NADPH-dependent reduction of N-acetyl-5-glutamyl phosphate to yield N-acetyl-L-glutamate 5-semialdehyde. The protein is N-acetyl-gamma-glutamyl-phosphate reductase of Prochlorococcus marinus (strain SARG / CCMP1375 / SS120).